Here is a 263-residue protein sequence, read N- to C-terminus: Endonuclease 8 (263 aa).

Pro-2 functions as the Schiff-base intermediate with DNA in the catalytic mechanism. The Proton donor role is filled by Glu-3. The active-site Proton donor; for beta-elimination activity is the Lys-53. Gln-70, Arg-125, and Asn-169 together coordinate DNA. The FPG-type zinc-finger motif lies at 229 to 263 (KVFHRDGEPCERCGSIIEKTTLSSRPFYWCPGCQH). Arg-253 acts as the Proton donor; for delta-elimination activity in catalysis.

The protein belongs to the FPG family. It depends on Zn(2+) as a cofactor.

The enzyme catalyses 2'-deoxyribonucleotide-(2'-deoxyribose 5'-phosphate)-2'-deoxyribonucleotide-DNA = a 3'-end 2'-deoxyribonucleotide-(2,3-dehydro-2,3-deoxyribose 5'-phosphate)-DNA + a 5'-end 5'-phospho-2'-deoxyribonucleoside-DNA + H(+). Functionally, involved in base excision repair of DNA damaged by oxidation or by mutagenic agents. Acts as a DNA glycosylase that recognizes and removes damaged bases. Has a preference for oxidized pyrimidines, such as thymine glycol, 5,6-dihydrouracil and 5,6-dihydrothymine. Has AP (apurinic/apyrimidinic) lyase activity and introduces nicks in the DNA strand. Cleaves the DNA backbone by beta-delta elimination to generate a single-strand break at the site of the removed base with both 3'- and 5'-phosphates. This Escherichia coli O9:H4 (strain HS) protein is Endonuclease 8.